The chain runs to 748 residues: Serine/threonine-protein kinase CG17528 (748 aa).

2 stretches are compositionally biased toward polar residues: residues 22-35 and 47-59; these read QASPSATSPQSVPS and EKTNQPHNVQEDN. Disordered stretches follow at residues 22–41 and 47–81; these read QASPSATSPQSVPSKANVVT and EKTNQPHNVQEDNNYNRDCDSPESSSSEQDKELDD. Phosphoserine is present on residues serine 67, serine 70, serine 73, serine 87, serine 88, and serine 89. Threonine 91 carries the phosphothreonine modification. Residue serine 93 is modified to Phosphoserine. Threonine 100 carries the phosphothreonine modification. Doublecortin domains are found at residues 158–244 and 313–396; these read LRIK…VEYN and RIVT…AEDF. The Protein kinase domain occupies 477–735; that stretch reads YSLGRIIGDG…SEDILDHSWT (259 aa). ATP is bound by residues 483–491 and lysine 506; that span reads IGDGNFAIV. Residue aspartate 598 is the Proton acceptor of the active site.

It belongs to the protein kinase superfamily. CAMK Ser/Thr protein kinase family. CaMK subfamily.

The catalysed reaction is L-seryl-[protein] + ATP = O-phospho-L-seryl-[protein] + ADP + H(+). It catalyses the reaction L-threonyl-[protein] + ATP = O-phospho-L-threonyl-[protein] + ADP + H(+). In Drosophila melanogaster (Fruit fly), this protein is Serine/threonine-protein kinase CG17528.